Consider the following 287-residue polypeptide: Nitrogenase iron protein (287 aa).

Residue glycine 8–serine 15 coordinates ATP. Residue cysteine 96 participates in [4Fe-4S] cluster binding. Arginine 99 is modified (ADP-ribosylarginine; by dinitrogenase reductase ADP-ribosyltransferase). Cysteine 130 provides a ligand contact to [4Fe-4S] cluster.

This sequence belongs to the NifH/BchL/ChlL family. In terms of assembly, homodimer. It depends on [4Fe-4S] cluster as a cofactor. The reversible ADP-ribosylation of Arg-99 inactivates the nitrogenase reductase and regulates nitrogenase activity.

The catalysed reaction is N2 + 8 reduced [2Fe-2S]-[ferredoxin] + 16 ATP + 16 H2O = H2 + 8 oxidized [2Fe-2S]-[ferredoxin] + 2 NH4(+) + 16 ADP + 16 phosphate + 6 H(+). Functionally, the key enzymatic reactions in nitrogen fixation are catalyzed by the nitrogenase complex, which has 2 components: the iron protein and the molybdenum-iron protein. This is Nitrogenase iron protein from Frankia casuarinae (strain DSM 45818 / CECT 9043 / HFP020203 / CcI3).